A 451-amino-acid chain; its full sequence is Phosphoglucosamine mutase (451 aa).

Catalysis depends on Ser-103, which acts as the Phosphoserine intermediate. Mg(2+) contacts are provided by Ser-103, Asp-243, Asp-245, and Asp-247. Phosphoserine is present on Ser-103.

This sequence belongs to the phosphohexose mutase family. Mg(2+) is required as a cofactor. Activated by phosphorylation.

It catalyses the reaction alpha-D-glucosamine 1-phosphate = D-glucosamine 6-phosphate. Catalyzes the conversion of glucosamine-6-phosphate to glucosamine-1-phosphate. In Lactiplantibacillus plantarum (strain ATCC BAA-793 / NCIMB 8826 / WCFS1) (Lactobacillus plantarum), this protein is Phosphoglucosamine mutase.